The sequence spans 28 residues: Kalata-B12 (28 aa).

A cross-link (cyclopeptide (Gly-Asp)) is located at residues 1–28; it reads GSLCGDTCFVLGCNDSSCSCNYPICVKD. 3 disulfide bridges follow: Cys4–Cys18, Cys8–Cys20, and Cys13–Cys25.

In terms of processing, this is a cyclic peptide.

Functionally, probably participates in a plant defense mechanism. The sequence is that of Kalata-B12 from Oldenlandia affinis.